We begin with the raw amino-acid sequence, 348 residues long: UDP-N-acetyl-alpha-D-glucosaminouronate 4-epimerase (348 aa).

Phenylalanine 26, isoleucine 27, aspartate 46, threonine 50, glycine 51, aspartate 77, isoleucine 78, glutamine 97, tyrosine 165, lysine 169, and valine 195 together coordinate NAD(+). The active-site Proton acceptor is the tyrosine 165.

It belongs to the NAD(P)-dependent epimerase/dehydratase family. In terms of assembly, homodimer. The cofactor is NAD(+).

The catalysed reaction is UDP-2-acetamido-2-deoxy-alpha-D-glucuronate = UDP-2-acetamido-2-deoxy-alpha-D-galacturonate. It catalyses the reaction UDP-N-acetyl-alpha-D-glucosamine = UDP-N-acetyl-alpha-D-galactosamine. It functions in the pathway capsule biogenesis; capsule polysaccharide biosynthesis. The protein operates within glycan metabolism; Vi-antigen biosynthesis. Its function is as follows. Epimerase required for the biosynthesis of the capsular polysaccharide, commonly referred as the Vi antigen, an important virulence factor. Catalyzes the reversible epimerization of UDP-N-acetylglucosaminuronic acid (UDP-GlcNAcA) to UDP-N-acetylgalactosaminuronic acid (UDP-GalNAcA). Also catalyzes, with lower efficiency, the reversible epimerization of UDP-N-acetylglucosamine (UDP-GlcNAc) to UDP-N-acetylgalactosamine (UDP-GalNAc). Cannot use UDP-glucose (UDP-Glc) and UDP-galactose (UDP-Gal) as substrates. The protein is UDP-N-acetyl-alpha-D-glucosaminouronate 4-epimerase of Salmonella typhi.